The primary structure comprises 132 residues: MAEEGIAAGGVMDVNTALQEVLKTALIHDGLARGIREAAKALDKRQAHLCVLASNCDEPMYVKLVEALLAEHQINLIKVDDNKKLGEWVGLCKIDREGKPRKVVGCSCVVVKDYGKESQAKDVIEEYFKCKK.

N-acetylalanine is present on Ala-2. An N6-succinyllysine modification is found at Lys-129.

This sequence belongs to the eukaryotic ribosomal protein eS12 family. In terms of assembly, part of the small subunit (SSU) processome, composed of more than 70 proteins and the RNA chaperone small nucleolar RNA (snoRNA) U3. Subunit of the 40S ribosomal complex.

It is found in the nucleus. It localises to the nucleolus. Functionally, part of the small subunit (SSU) processome, first precursor of the small eukaryotic ribosomal subunit. During the assembly of the SSU processome in the nucleolus, many ribosome biogenesis factors, an RNA chaperone and ribosomal proteins associate with the nascent pre-rRNA and work in concert to generate RNA folding, modifications, rearrangements and cleavage as well as targeted degradation of pre-ribosomal RNA by the RNA exosome. Subunit of the 40S ribosomal complex. The polypeptide is Small ribosomal subunit protein eS12 (Rps12) (Rattus norvegicus (Rat)).